Consider the following 125-residue polypeptide: Small ribosomal subunit protein mS41 (125 aa).

The N-terminal 23 residues, 1 to 23, are a transit peptide targeting the mitochondrion; sequence MLFRRLFSSSVIVQAASKTSLRK.

Belongs to the mitochondrion-specific ribosomal protein mS41 family.

It is found in the mitochondrion. Its function is as follows. Involved in telomere length regulation. This Kluyveromyces lactis (strain ATCC 8585 / CBS 2359 / DSM 70799 / NBRC 1267 / NRRL Y-1140 / WM37) (Yeast) protein is Small ribosomal subunit protein mS41 (FYV4).